Here is a 183-residue protein sequence, read N- to C-terminus: Mid1-interacting protein 1 (183 aa).

Met-1 is modified (N-acetylmethionine). A phosphoserine mark is found at Ser-75 and Ser-79.

It belongs to the SPOT14 family. In terms of assembly, homodimer in the absence of THRSP. Heterodimer with THRSP. The homodimer interacts with ACACA and ACACB. Promotes polymerization of Acetyl-CoA carboxylase to form complexes that contain MID1IP1 and ACACA and/or ACACB. Interaction with THRSP interferes with ACACA binding.

It localises to the nucleus. The protein resides in the cytoplasm. Its subcellular location is the cytoskeleton. In terms of biological role, plays a role in the regulation of lipogenesis in liver. Up-regulates ACACA enzyme activity. Required for efficient lipid biosynthesis, including triacylglycerol, diacylglycerol and phospholipid. Involved in stabilization of microtubules. This is Mid1-interacting protein 1 (MID1IP1) from Homo sapiens (Human).